Consider the following 64-residue polypeptide: Weak toxin CM-9a (64 aa).

Intrachain disulfides connect Cys3/Cys24, Cys6/Cys11, Cys17/Cys41, Cys45/Cys56, and Cys57/Cys62.

The protein belongs to the three-finger toxin family. Ancestral subfamily. Orphan group II sub-subfamily. In terms of tissue distribution, expressed by the venom gland.

The protein resides in the secreted. Its function is as follows. Binds with low affinity to muscular (alpha-1-beta-1-delta-epsilon/CHRNA1-CHRNB1-CHRND-CHRNE) and very low affinity to neuronal (alpha-7/CHRNA7) nicotinic acetylcholine receptor (nAChR). In Naja kaouthia (Monocled cobra), this protein is Weak toxin CM-9a.